The following is a 648-amino-acid chain: MEIFHQAIWLIPVLPLSASMLSGIGLLTFRETTSDLRRLHGALAIGAMALSFVVSLGVLWNQLHGIAPVRWIIEWMLTDTFRLEIGYWVDPLTSTMLVVVTSVALLVMIYSDEYMHVDEGYVRFFVYLSIFTTSMLGLVLSPNLVQVYGFWELVGMCSYLLVGFWFTRPTAAEASQKAFITNRVGDFGLLLGILALYWMTGSFEFASIADRLGDLLIAIPSLRTIACIACILVFMGPIAKSAQFPLHVWLPDAMEGPTPISALIHAATMVAAGVFLVARMFPVFDQLPLVMELIAWTGTLTAFLGATMALTQSDIKKGLAYSTMSQLGYMIMALGTGAYSEALFHLTTHAYSKALLFLAAGSVIHGMEPVVGFSPMQNQNMHRMGGLRKYMPLTAMTFLLGTCSICGIPPLACFWSKDAILAEVFATHPTCWLIAWLTAGMTGFYMFRIYFLTFEGSFRSDLGRAKPKESHLGMVAPLIILAIPTVAIGSLGTPFAPVWETFVHAPGQLSSLDEEFDLAEFLEMAGSSVGIGLLGISLSSLMYRNYAIDATRISEYFSPLNRLFASKWYIDDLYAQVIVQGTRTIAQTLLIFDQRIIDGAVNLTAFGTLSAADTLKYWENGRVQFYILSIIFGVLFGSWLLTTHLSSL.

Helical transmembrane passes span 7 to 27 (AIWLIPVLPLSASMLSGIGLL), 39 to 59 (LHGALAIGAMALSFVVSLGVL), 89 to 109 (VDPLTSTMLVVVTSVALLVMI), 124 to 144 (FFVYLSIFTTSMLGLVLSPNL), 147 to 167 (VYGFWELVGMCSYLLVGFWFT), 189 to 209 (LLLGILALYWMTGSFEFASIA), 215 to 235 (LLIAIPSLRTIACIACILVFM), 258 to 278 (TPISALIHAATMVAAGVFLVA), 289 to 309 (LVMELIAWTGTLTAFLGATMA), 327 to 347 (LGYMIMALGTGAYSEALFHLT), 354 to 374 (ALLFLAAGSVIHGMEPVVGFS), 395 to 415 (AMTFLLGTCSICGIPPLACFW), 432 to 452 (WLIAWLTAGMTGFYMFRIYFL), 472 to 492 (LGMVAPLIILAIPTVAIGSLG), 518 to 538 (LAEFLEMAGSSVGIGLLGISL), and 625 to 645 (FYILSIIFGVLFGSWLLTTHL).

Belongs to the complex I subunit 5 family. NDH is composed of at least 16 different subunits, 5 of which are encoded in the nucleus.

The protein localises to the plastid. It is found in the chloroplast thylakoid membrane. It catalyses the reaction a plastoquinone + NADH + (n+1) H(+)(in) = a plastoquinol + NAD(+) + n H(+)(out). It carries out the reaction a plastoquinone + NADPH + (n+1) H(+)(in) = a plastoquinol + NADP(+) + n H(+)(out). NDH shuttles electrons from NAD(P)H:plastoquinone, via FMN and iron-sulfur (Fe-S) centers, to quinones in the photosynthetic chain and possibly in a chloroplast respiratory chain. The immediate electron acceptor for the enzyme in this species is believed to be plastoquinone. Couples the redox reaction to proton translocation, and thus conserves the redox energy in a proton gradient. In Nephroselmis olivacea (Green alga), this protein is NAD(P)H-quinone oxidoreductase subunit 5, chloroplastic (ndhF).